A 162-amino-acid chain; its full sequence is Nucleotide-binding protein SGR_2909 (162 aa).

It belongs to the YajQ family.

In terms of biological role, nucleotide-binding protein. The polypeptide is Nucleotide-binding protein SGR_2909 (Streptomyces griseus subsp. griseus (strain JCM 4626 / CBS 651.72 / NBRC 13350 / KCC S-0626 / ISP 5235)).